Reading from the N-terminus, the 934-residue chain is Bifunctional uridylyltransferase/uridylyl-removing enzyme (934 aa).

Positions 1-379 are uridylyltransferase; the sequence is MSAHDLKLEE…TFSRRKRKLS (379 aa). A uridylyl-removing region spans residues 380–736; sequence DDGAFISENH…AKPHAFEAVT (357 aa). The HD domain occupies 496-613; the sequence is VDEHLLRCIA…IDFADTVQTM (118 aa). 2 ACT domains span residues 737-818 and 848-931; these read EITV…DMLA and VIEV…RSPQ.

The protein belongs to the GlnD family. The cofactor is Mg(2+).

It catalyses the reaction [protein-PII]-L-tyrosine + UTP = [protein-PII]-uridylyl-L-tyrosine + diphosphate. The enzyme catalyses [protein-PII]-uridylyl-L-tyrosine + H2O = [protein-PII]-L-tyrosine + UMP + H(+). With respect to regulation, uridylyltransferase (UTase) activity is inhibited by glutamine, while glutamine activates uridylyl-removing (UR) activity. Functionally, modifies, by uridylylation and deuridylylation, the PII regulatory proteins (GlnB and homologs), in response to the nitrogen status of the cell that GlnD senses through the glutamine level. Under low glutamine levels, catalyzes the conversion of the PII proteins and UTP to PII-UMP and PPi, while under higher glutamine levels, GlnD hydrolyzes PII-UMP to PII and UMP (deuridylylation). Thus, controls uridylylation state and activity of the PII proteins, and plays an important role in the regulation of nitrogen assimilation and metabolism. The protein is Bifunctional uridylyltransferase/uridylyl-removing enzyme of Brucella suis biovar 1 (strain 1330).